We begin with the raw amino-acid sequence, 536 residues long: GATA zinc finger domain-containing protein 9 (536 aa).

Polar residues-rich tracts occupy residues 1-20 and 36-55; these read MTSF…QPHS and CQSS…NPNA. Disordered stretches follow at residues 1–77, 183–211, 237–258, 273–342, and 370–423; these read MTSF…LSGS, SSSL…VVRS, RSAF…GGGS, QLHY…GFVQ, and ALFS…NISS. Residues 56–72 show a composition bias toward low complexity; the sequence is TTNNTTTTTTTTTTTTN. Residues 188 to 206 show a composition bias toward acidic residues; it reads SEDDDCCYETEEDDNGEDG. Residues 237 to 247 are compositionally biased toward basic residues; the sequence is RSAFKKNKKDY. The segment covering 273 to 283 has biased composition (polar residues); the sequence is QLHYSNSMTDN. Low complexity-rich tracts occupy residues 318–335 and 379–399; these read SNSN…NNNN and PSPT…NSGN. The GATA-type zinc-finger motif lies at 479 to 504; it reads CRHCGTTDTPEWRRGPDGRKSLCNAC.

The chain is GATA zinc finger domain-containing protein 9 (gtaI) from Dictyostelium discoideum (Social amoeba).